Here is a 178-residue protein sequence, read N- to C-terminus: Cytochrome b6-f complex iron-sulfur subunit (178 aa).

Residues 20–42 traverse the membrane as a helical segment; the sequence is LLTFGTATGVALGALYPVANYFM. Residues 65–161 enclose the Rieske domain; the sequence is KTGWLATHQA…VDIEDDAVLV (97 aa). [2Fe-2S] cluster is bound by residues C107, H109, C125, and H128. An intrachain disulfide couples C112 to C127.

It belongs to the Rieske iron-sulfur protein family. In terms of assembly, the 4 large subunits of the cytochrome b6-f complex are cytochrome b6, subunit IV (17 kDa polypeptide, PetD), cytochrome f and the Rieske protein, while the 4 small subunits are PetG, PetL, PetM and PetN. The complex functions as a dimer. [2Fe-2S] cluster is required as a cofactor.

The protein localises to the cellular thylakoid membrane. The catalysed reaction is 2 oxidized [plastocyanin] + a plastoquinol + 2 H(+)(in) = 2 reduced [plastocyanin] + a plastoquinone + 4 H(+)(out). In terms of biological role, component of the cytochrome b6-f complex, which mediates electron transfer between photosystem II (PSII) and photosystem I (PSI), cyclic electron flow around PSI, and state transitions. This is Cytochrome b6-f complex iron-sulfur subunit from Prochlorococcus marinus (strain AS9601).